The sequence spans 246 residues: MSKKHCSELLPNKMFRNQDSKYLIPVQKEAPPVTTLPMKASTVKSPHNCEAILRDADPPISLSSVNLSEQLRSGVFLKPKKQIKYWVDERNSNCFMLFAKNLSITWSDDVNYWTWFTEKESPNENVEAVGLKNVCWLDITGKFDTRNLTPGIVYEVVFKVKLEDPAYGWDTPVNLKLVLPNGKEKPQEKKVSLRELPRYKWVDVRVGEFVPEKSAAGEITFSMYEHAAGVWKKGLSLKGVAIRPKQ.

In terms of tissue distribution, vascular tissues, specifically in phloem companion cell-sieve element complexes.

The chain is Protein PHLOEM PROTEIN 2-LIKE A1 (PP2A1) from Arabidopsis thaliana (Mouse-ear cress).